A 272-amino-acid polypeptide reads, in one-letter code: Putative esterase/lipase 3 (272 aa).

H34 is a catalytic residue. The active-site Charge relay system is the S100.

The protein belongs to the lipase/esterase LIP3/BchO family.

The polypeptide is Putative esterase/lipase 3 (Mycoplasma pneumoniae (strain ATCC 29342 / M129 / Subtype 1) (Mycoplasmoides pneumoniae)).